We begin with the raw amino-acid sequence, 53 residues long: UPF0391 membrane protein SG0393 (53 aa).

2 helical membrane-spanning segments follow: residues 4 to 24 and 27 to 47; these read WGII…GGLA and AAWA…ISLF.

The protein belongs to the UPF0391 family.

The protein resides in the cell membrane. The sequence is that of UPF0391 membrane protein SG0393 from Sodalis glossinidius (strain morsitans).